Consider the following 89-residue polypeptide: Small ribosomal subunit protein uS15 (89 aa).

Belongs to the universal ribosomal protein uS15 family. As to quaternary structure, part of the 30S ribosomal subunit. Forms a bridge to the 50S subunit in the 70S ribosome, contacting the 23S rRNA.

One of the primary rRNA binding proteins, it binds directly to 16S rRNA where it helps nucleate assembly of the platform of the 30S subunit by binding and bridging several RNA helices of the 16S rRNA. Functionally, forms an intersubunit bridge (bridge B4) with the 23S rRNA of the 50S subunit in the ribosome. The polypeptide is Small ribosomal subunit protein uS15 (Sodalis glossinidius (strain morsitans)).